We begin with the raw amino-acid sequence, 354 residues long: Uroporphyrinogen decarboxylase (354 aa).

Substrate-binding positions include 27–31, Asp-77, Tyr-154, Thr-209, and His-327; that span reads RQAGR.

This sequence belongs to the uroporphyrinogen decarboxylase family. Homodimer.

The protein localises to the cytoplasm. The catalysed reaction is uroporphyrinogen III + 4 H(+) = coproporphyrinogen III + 4 CO2. It functions in the pathway porphyrin-containing compound metabolism; protoporphyrin-IX biosynthesis; coproporphyrinogen-III from 5-aminolevulinate: step 4/4. In terms of biological role, catalyzes the decarboxylation of four acetate groups of uroporphyrinogen-III to yield coproporphyrinogen-III. This Escherichia fergusonii (strain ATCC 35469 / DSM 13698 / CCUG 18766 / IAM 14443 / JCM 21226 / LMG 7866 / NBRC 102419 / NCTC 12128 / CDC 0568-73) protein is Uroporphyrinogen decarboxylase.